A 265-amino-acid polypeptide reads, in one-letter code: 4-hydroxy-tetrahydrodipicolinate reductase (265 aa).

NAD(+)-binding positions include 7 to 12 (GASGRM) and D33. R34 provides a ligand contact to NADP(+). NAD(+)-binding positions include 96–98 (GTT) and 120–123 (SANM). H153 functions as the Proton donor/acceptor in the catalytic mechanism. H154 lines the (S)-2,3,4,5-tetrahydrodipicolinate pocket. K157 serves as the catalytic Proton donor. Residue 163 to 164 (GT) participates in (S)-2,3,4,5-tetrahydrodipicolinate binding.

Belongs to the DapB family.

The protein resides in the cytoplasm. It carries out the reaction (S)-2,3,4,5-tetrahydrodipicolinate + NAD(+) + H2O = (2S,4S)-4-hydroxy-2,3,4,5-tetrahydrodipicolinate + NADH + H(+). It catalyses the reaction (S)-2,3,4,5-tetrahydrodipicolinate + NADP(+) + H2O = (2S,4S)-4-hydroxy-2,3,4,5-tetrahydrodipicolinate + NADPH + H(+). It functions in the pathway amino-acid biosynthesis; L-lysine biosynthesis via DAP pathway; (S)-tetrahydrodipicolinate from L-aspartate: step 4/4. Catalyzes the conversion of 4-hydroxy-tetrahydrodipicolinate (HTPA) to tetrahydrodipicolinate. The chain is 4-hydroxy-tetrahydrodipicolinate reductase from Burkholderia pseudomallei (strain 1106a).